The sequence spans 328 residues: Formimidoylglutamase (328 aa).

6 residues coordinate Mn(2+): histidine 133, aspartate 159, histidine 161, aspartate 163, aspartate 253, and aspartate 255.

Belongs to the arginase family. The cofactor is Mn(2+).

The enzyme catalyses N-formimidoyl-L-glutamate + H2O = formamide + L-glutamate. Its pathway is amino-acid degradation; L-histidine degradation into L-glutamate; L-glutamate from N-formimidoyl-L-glutamate (hydrolase route): step 1/1. Its function is as follows. Catalyzes the conversion of N-formimidoyl-L-glutamate to L-glutamate and formamide. This chain is Formimidoylglutamase, found in Streptococcus pyogenes serotype M5 (strain Manfredo).